The sequence spans 243 residues: Entry-fusion complex associated protein OPG095 (243 aa).

The N-myristoyl glycine; by host moiety is linked to residue Gly2. The tract at residues 2 to 12 is targeting to MV membrane; it reads GAAASIQTTVT. At 2–183 the chain is on the virion surface side; that stretch reads GAAASIQTTV…VSGNQSTGND (182 aa). Cystine bridges form between Cys34-Cys57, Cys49-Cys136, and Cys116-Cys158. Residues 184 to 204 form a helical membrane-spanning segment; it reads FSKYLYIIGGIICFLILLYYA. Topologically, residues 205–243 are intravirion; sequence KKLFFMSTNDKVKVLLAKKPDVHWTTYIDTYFRSSPVLV.

It belongs to the orthopoxvirus OPG095 family. As to quaternary structure, component of the entry fusion complex (EFC) composed of OPG053, OPG076, OPG086, OPG094, OPG095, OPG099, OPG107, OPG143, OPG104, OPG147 and OPG155. Except for OPG095 and OPG053, each of the EFC proteins is required for assembly or stability of the complex. Post-translationally, myristoylated. In terms of processing, disulfid bonds are oxidized in the cytoplasm by OPG088 protein. Unglycosylated because produced in viral factories instead of the classic ER -Golgi route.

It is found in the virion membrane. Its function is as follows. Component of the entry fusion complex (EFC), which consists of 11 proteins. During cell infection, this complex mediates entry of the virion core into the host cytoplasm by a two-step mechanism consisting of lipid mixing of the viral and cellular membranes and subsequent pore formation. This chain is Entry-fusion complex associated protein OPG095 (OPG099), found in Vertebrata (FPV).